Here is a 380-residue protein sequence, read N- to C-terminus: Tubby-like F-box protein 9 (380 aa).

Residues 30–76 (PFSWSELPEELLREILIRVETVDGGDWPSRRNVVACAGVCRSWRILT) enclose the F-box domain. A disordered region spans residues 258-283 (SSRSSPVFRSHSKPLRSNSASCSDSG). Polar residues predominate over residues 272 to 283 (LRSNSASCSDSG).

Belongs to the TUB family. Part of a SCF (SKP1-cullin-F-box) protein ligase complex. Interacts with SKP1A/ASK1 and XERICO. As to expression, ubiquitous.

Its pathway is protein modification; protein ubiquitination. Its function is as follows. Component of SCF(ASK-cullin-F-box) E3 ubiquitin ligase complexes, which may mediate the ubiquitination and subsequent proteasomal degradation of target proteins. Confers sensitivity to ABA during seed germination and early seedling development. In Arabidopsis thaliana (Mouse-ear cress), this protein is Tubby-like F-box protein 9.